A 406-amino-acid polypeptide reads, in one-letter code: Ribonuclease D (406 aa).

The 168-residue stretch at 26 to 193 (LITQTTDLEI…VYLLLKKQLE (168 aa)) folds into the 3'-5' exonuclease domain. Positions 231–312 (KPRELAVLQK…HEGLEVDLAT (82 aa)) constitute an HRDC domain.

This sequence belongs to the RNase D family. A divalent metal cation is required as a cofactor.

The protein localises to the cytoplasm. It catalyses the reaction Exonucleolytic cleavage that removes extra residues from the 3'-terminus of tRNA to produce 5'-mononucleotides.. Its function is as follows. Exonuclease involved in the 3' processing of various precursor tRNAs. Initiates hydrolysis at the 3'-terminus of an RNA molecule and releases 5'-mononucleotides. The polypeptide is Ribonuclease D (Bartonella henselae (strain ATCC 49882 / DSM 28221 / CCUG 30454 / Houston 1) (Rochalimaea henselae)).